A 358-amino-acid chain; its full sequence is DNA integrity scanning protein DisA (358 aa).

Residues 9–147 (KQDLSEILQF…ENMKYILKDI (139 aa)) form the DAC domain. Residues G76, L94, and 107–111 (MRHRT) contribute to the ATP site.

Belongs to the DisA family. In terms of assembly, homooctamer. Requires Mg(2+) as cofactor.

The enzyme catalyses 2 ATP = 3',3'-c-di-AMP + 2 diphosphate. Its function is as follows. Participates in a DNA-damage check-point that is active prior to asymmetric division when DNA is damaged. DisA forms globular foci that rapidly scan along the chromosomes during sporulation, searching for lesions. When a lesion is present, DisA pauses at the lesion site. This triggers a cellular response that culminates in a temporary block in sporulation initiation. Functionally, also has diadenylate cyclase activity, catalyzing the condensation of 2 ATP molecules into cyclic di-AMP (c-di-AMP). c-di-AMP acts as a signaling molecule that couples DNA integrity with progression of sporulation. The rise in c-di-AMP level generated by DisA while scanning the chromosome, operates as a positive signal that advances sporulation; upon encountering a lesion, the DisA focus arrests at the damaged site and halts c-di-AMP synthesis. This is DNA integrity scanning protein DisA from Bacillus licheniformis (strain ATCC 14580 / DSM 13 / JCM 2505 / CCUG 7422 / NBRC 12200 / NCIMB 9375 / NCTC 10341 / NRRL NRS-1264 / Gibson 46).